The chain runs to 98 residues: NADH-ubiquinone oxidoreductase chain 4L (98 aa).

The next 3 membrane-spanning stretches (helical) occupy residues 1–21 (MTPT…GMLT), 27–47 (VASL…ATLI), and 61–81 (IILL…LISI).

Belongs to the complex I subunit 4L family. Core subunit of respiratory chain NADH dehydrogenase (Complex I) which is composed of 45 different subunits.

The protein resides in the mitochondrion inner membrane. The catalysed reaction is a ubiquinone + NADH + 5 H(+)(in) = a ubiquinol + NAD(+) + 4 H(+)(out). Core subunit of the mitochondrial membrane respiratory chain NADH dehydrogenase (Complex I) which catalyzes electron transfer from NADH through the respiratory chain, using ubiquinone as an electron acceptor. Part of the enzyme membrane arm which is embedded in the lipid bilayer and involved in proton translocation. This Macaca fascicularis (Crab-eating macaque) protein is NADH-ubiquinone oxidoreductase chain 4L (MT-ND4L).